Consider the following 271-residue polypeptide: 4-hydroxy-tetrahydrodipicolinate reductase (271 aa).

Residue 10–15 participates in NAD(+) binding; that stretch reads GAAGRM. Position 37 (R37) interacts with NADP(+). Residues 100-102 and 124-127 contribute to the NAD(+) site; these read GTT and SGNM. The Proton donor/acceptor role is filled by H157. H158 lines the (S)-2,3,4,5-tetrahydrodipicolinate pocket. K161 (proton donor) is an active-site residue. 167–168 contributes to the (S)-2,3,4,5-tetrahydrodipicolinate binding site; it reads GT. The disordered stretch occupies residues 183-202; sequence SLSEHEQRGRDGHTGPRKDG. Basic and acidic residues predominate over residues 185 to 202; that stretch reads SEHEQRGRDGHTGPRKDG.

Belongs to the DapB family.

It localises to the cytoplasm. It carries out the reaction (S)-2,3,4,5-tetrahydrodipicolinate + NAD(+) + H2O = (2S,4S)-4-hydroxy-2,3,4,5-tetrahydrodipicolinate + NADH + H(+). It catalyses the reaction (S)-2,3,4,5-tetrahydrodipicolinate + NADP(+) + H2O = (2S,4S)-4-hydroxy-2,3,4,5-tetrahydrodipicolinate + NADPH + H(+). It functions in the pathway amino-acid biosynthesis; L-lysine biosynthesis via DAP pathway; (S)-tetrahydrodipicolinate from L-aspartate: step 4/4. Functionally, catalyzes the conversion of 4-hydroxy-tetrahydrodipicolinate (HTPA) to tetrahydrodipicolinate. This is 4-hydroxy-tetrahydrodipicolinate reductase from Beijerinckia indica subsp. indica (strain ATCC 9039 / DSM 1715 / NCIMB 8712).